A 359-amino-acid polypeptide reads, in one-letter code: MIAIPSDRLDAILARHDIVTATLSAGEADSESFVQLSRELSDLDDVVAAIRAYRAAEAELRGVEAMLQEGDPEMRALAAEEKPEVEAARDAAAKALQIMLLPKDAADEKSAILEIRAGTGGDEAALFAGDLLRMYARYADLKGWKIEVVSESPGTMGGYREVVAEVKGRGVFARLKFESGAHRVQRVPETETQGRIHTSAATVAVLPEAEEVDIHVNEADLKIDTMRAQGAGGQHVNKTESAIRITHIPSGIVVFVQEERSQHKNRARAMAVLRARLYEQERSQKDAARAADRRAQVGSGDRSERIRTYNFPQGRVTDHRINLTLYKLEEVLAGTALDELVDALVTEHQAALLAAEGLG.

Position 234 is an N5-methylglutamine (Gln234). Residues 283–305 (SQKDAARAADRRAQVGSGDRSER) are disordered.

The protein belongs to the prokaryotic/mitochondrial release factor family. Post-translationally, methylated by PrmC. Methylation increases the termination efficiency of RF1.

Its subcellular location is the cytoplasm. Functionally, peptide chain release factor 1 directs the termination of translation in response to the peptide chain termination codons UAG and UAA. The polypeptide is Peptide chain release factor 1 (Methylobacterium sp. (strain 4-46)).